The sequence spans 107 residues: Urease subunit beta (107 aa).

It belongs to the urease beta subunit family. In terms of assembly, heterotrimer of UreA (gamma), UreB (beta) and UreC (alpha) subunits. Three heterotrimers associate to form the active enzyme.

It is found in the cytoplasm. It catalyses the reaction urea + 2 H2O + H(+) = hydrogencarbonate + 2 NH4(+). Its pathway is nitrogen metabolism; urea degradation; CO(2) and NH(3) from urea (urease route): step 1/1. This chain is Urease subunit beta, found in Teredinibacter turnerae (strain ATCC 39867 / T7901).